The following is a 127-amino-acid chain: MDVFKKGFSIAKEGVVGAVEKTKQGVTEAAEKTKEGVMYVGTKTKENVVHSVTSVAEKTKEQANAVSEAVVSSVNTVAAKTVEEAENIAVTSGVVRKEDLKPSAPQQEGEAAKEKEEVAEEAQSGGD.

Repeat copies occupy residues 20-30 (EKTKQGVTEAA) and 31-41 (EKTKEGVMYVG). The 4 X 11 AA tandem repeats of [EGSA]-K-T-K-[EQ]-[GQ]-V-X(4) stretch occupies residues 20–67 (EKTKQGVTEAAEKTKEGVMYVGTKTKENVVHSVTSVAEKTKEQANAVS). The stretch at 42-56 (TKTKENVVHSVTSVA) is one 3; approximate repeat. Copy 4 of the repeat occupies 57–67 (EKTKEQANAVS). 2 positions are modified to phosphoserine: Ser67 and Ser72. The tract at residues 97–127 (KEDLKPSAPQQEGEAAKEKEEVAEEAQSGGD) is disordered. Ser124 is modified (phosphoserine; by BARK1, CaMK2 and CK2).

This sequence belongs to the synuclein family. May be a centrosome-associated protein. Interacts with MYOC; affects its secretion and its aggregation. Post-translationally, phosphorylated. Phosphorylation by GRK5 appears to occur on residues distinct from the residue phosphorylated by other kinases.

Its subcellular location is the cytoplasm. It is found in the perinuclear region. The protein localises to the cytoskeleton. It localises to the microtubule organizing center. The protein resides in the centrosome. Its subcellular location is the spindle. Its function is as follows. Plays a role in neurofilament network integrity. May be involved in modulating axonal architecture during development and in the adult. In vitro, increases the susceptibility of neurofilament-H to calcium-dependent proteases. May also function in modulating the keratin network in skin. Activates the MAPK and Elk-1 signal transduction pathway. The chain is Gamma-synuclein (SNCG) from Macaca fascicularis (Crab-eating macaque).